The primary structure comprises 446 residues: Ribulose bisphosphate carboxylase large chain (446 aa).

Residues N89 and T139 each coordinate substrate. K141 serves as the catalytic Proton acceptor. Residue K143 coordinates substrate. Positions 167, 169, and 170 each coordinate Mg(2+). At K167 the chain carries N6-carboxylysine. H260 serves as the catalytic Proton acceptor. R261, H293, and S345 together coordinate substrate.

The protein belongs to the RuBisCO large chain family. Type I subfamily. Heterohexadecamer of 8 large chains and 8 small chains; disulfide-linked. The disulfide link is formed within the large subunit homodimers. Mg(2+) is required as a cofactor. In terms of processing, the disulfide bond which can form in the large chain dimeric partners within the hexadecamer appears to be associated with oxidative stress and protein turnover.

It localises to the plastid. It is found in the chloroplast. The enzyme catalyses 2 (2R)-3-phosphoglycerate + 2 H(+) = D-ribulose 1,5-bisphosphate + CO2 + H2O. The catalysed reaction is D-ribulose 1,5-bisphosphate + O2 = 2-phosphoglycolate + (2R)-3-phosphoglycerate + 2 H(+). Functionally, ruBisCO catalyzes two reactions: the carboxylation of D-ribulose 1,5-bisphosphate, the primary event in carbon dioxide fixation, as well as the oxidative fragmentation of the pentose substrate in the photorespiration process. Both reactions occur simultaneously and in competition at the same active site. This Exacum affine (Persian violet) protein is Ribulose bisphosphate carboxylase large chain.